Reading from the N-terminus, the 317-residue chain is Ribosomal RNA small subunit methyltransferase H (317 aa).

S-adenosyl-L-methionine is bound by residues 39–41 (GGH), aspartate 59, phenylalanine 83, aspartate 104, and glutamine 111.

Belongs to the methyltransferase superfamily. RsmH family.

It is found in the cytoplasm. It carries out the reaction cytidine(1402) in 16S rRNA + S-adenosyl-L-methionine = N(4)-methylcytidine(1402) in 16S rRNA + S-adenosyl-L-homocysteine + H(+). In terms of biological role, specifically methylates the N4 position of cytidine in position 1402 (C1402) of 16S rRNA. In Paraburkholderia phymatum (strain DSM 17167 / CIP 108236 / LMG 21445 / STM815) (Burkholderia phymatum), this protein is Ribosomal RNA small subunit methyltransferase H.